A 509-amino-acid chain; its full sequence is Maturase K (509 aa).

Belongs to the intron maturase 2 family. MatK subfamily.

The protein resides in the plastid. It localises to the chloroplast. In terms of biological role, usually encoded in the trnK tRNA gene intron. Probably assists in splicing its own and other chloroplast group II introns. This chain is Maturase K, found in Solanum tuberosum (Potato).